The chain runs to 601 residues: NADH-quinone oxidoreductase subunit C/D (601 aa).

Residues 1–191 are NADH dehydrogenase I subunit C; the sequence is MKLTREFPSN…DPFMLDAVKQ (191 aa). Residues 215–601 form an NADH dehydrogenase I subunit D region; it reads DYMFLNLGPN…IDFVMSDVDR (387 aa).

This sequence in the N-terminal section; belongs to the complex I 30 kDa subunit family. In the C-terminal section; belongs to the complex I 49 kDa subunit family. NDH-1 is composed of 13 different subunits. Subunits NuoB, CD, E, F, and G constitute the peripheral sector of the complex.

It localises to the cell inner membrane. It carries out the reaction a quinone + NADH + 5 H(+)(in) = a quinol + NAD(+) + 4 H(+)(out). NDH-1 shuttles electrons from NADH, via FMN and iron-sulfur (Fe-S) centers, to quinones in the respiratory chain. The immediate electron acceptor for the enzyme in this species is believed to be ubiquinone. Couples the redox reaction to proton translocation (for every two electrons transferred, four hydrogen ions are translocated across the cytoplasmic membrane), and thus conserves the redox energy in a proton gradient. This is NADH-quinone oxidoreductase subunit C/D from Aeromonas hydrophila subsp. hydrophila (strain ATCC 7966 / DSM 30187 / BCRC 13018 / CCUG 14551 / JCM 1027 / KCTC 2358 / NCIMB 9240 / NCTC 8049).